Consider the following 500-residue polypeptide: Probable cation transporter HKT1;4 (500 aa).

The Cytoplasmic segment spans residues 1–12 (MPTSRRALAGGA). 2 helical membrane-spanning segments follow: residues 13-33 (LSMH…LLGV) and 74-94 (LVVL…LVGL). Over 95–156 (ASKWSKLRSD…ADTLRHNAVR (62 aa)) the chain is Cytoplasmic. The segment at 121 to 145 (ADIDGGDVENPTSSGEEAASRRRPM) is disordered. Helical transmembrane passes span 157–177 (ALFY…AVAV) and 239–259 (VLAG…AAAA). Topologically, residues 260–290 (ATRREELVEMAREGGRAAAAGYAHLMPARRC) are cytoplasmic. The next 2 membrane-spanning stretches (helical) occupy residues 291–311 (WMLA…VCGM) and 346–366 (LSIL…LPPY). Over 367-390 (TTWFPFEENSTTKDSNAENQGIRL) the chain is Cytoplasmic. The next 2 helical transmembrane spans lie at 391 to 411 (LEST…AICI) and 464 to 484 (GFVG…MFFG). Topologically, residues 485–500 (RLKKFSMKGGKAWKLS) are cytoplasmic.

Belongs to the TrkH potassium transport family. HKT (TC 2.A.38.3) subfamily.

The protein resides in the membrane. Functionally, probable cation transporter. May be involved in regulation of potassium-sodium homeostasis. This is Probable cation transporter HKT1;4 from Oryza sativa subsp. japonica (Rice).